We begin with the raw amino-acid sequence, 1473 residues long: DNA topoisomerase 2 (1473 aa).

The interval 1-20 (MATKLPLQNSNAANVAKAPA) is disordered. Residues 9–20 (NSNAANVAKAPA) show a composition bias toward low complexity. ATP is bound by residues N91, N120, 148-150 (SSN), and 161-168 (GRNGYGAK). The segment at 345 to 347 (NKK) is interaction with DNA. Residue 378-380 (QTK) coordinates ATP. The Toprim domain maps to 455–569 (CTLILTEGDS…SLLQVPSFLV (115 aa)). Residues E461, D538, and D540 each contribute to the Mg(2+) site. The Topo IIA-type catalytic domain occupies 704–1163 (IPSMVDGLKP…TPKSLWLSDL (460 aa)). The active-site O-(5'-phospho-DNA)-tyrosine intermediate is the Y794. The segment at 980–989 (KLTTTIATSN) is interaction with DNA. Disordered regions lie at residues 1195–1230 (SGAA…SYSA), 1242–1297 (KPKA…EVEE), and 1313–1473 (GSAP…EDDE). 2 stretches are compositionally biased toward basic residues: residues 1200-1216 (KVKR…KTTK) and 1278-1288 (PKGRQGAKKKA). Residues 1351–1360 (KPAATKAAKP) show a composition bias toward low complexity. Polar residues-rich tracts occupy residues 1394-1404 (SPFNKKSSSVM) and 1417-1427 (ENVAGNSSSEK). The span at 1453-1473 (SESESANDSEFDDIEDDEDDE) shows a compositional bias: acidic residues.

It belongs to the type II topoisomerase family. Homodimer. The cofactor is Mg(2+). Requires Mn(2+) as cofactor. Ca(2+) serves as cofactor.

It carries out the reaction ATP-dependent breakage, passage and rejoining of double-stranded DNA.. Its function is as follows. Control of topological states of DNA by transient breakage and subsequent rejoining of DNA strands. Topoisomerase II makes double-strand breaks. The sequence is that of DNA topoisomerase 2 (TOP2) from Arabidopsis thaliana (Mouse-ear cress).